The following is a 127-amino-acid chain: UPF0716 protein YtzA (127 aa).

Helical transmembrane passes span 3-22 (FLFL…FLFL), 26-46 (IGIL…AAAA), 70-90 (AIAD…PGFL), and 93-115 (LAGA…FKWL).

It belongs to the UPF0716 (FxsA) family.

It is found in the cell membrane. This is UPF0716 protein YtzA (ytzA) from Bacillus subtilis (strain 168).